A 189-amino-acid chain; its full sequence is Large ribosomal subunit protein uL6 (189 aa).

This sequence belongs to the universal ribosomal protein uL6 family. In terms of assembly, part of the 50S ribosomal subunit.

This protein binds to the 23S rRNA, and is important in its secondary structure. It is located near the subunit interface in the base of the L7/L12 stalk, and near the tRNA binding site of the peptidyltransferase center. The protein is Large ribosomal subunit protein uL6 of Bacteroides thetaiotaomicron (strain ATCC 29148 / DSM 2079 / JCM 5827 / CCUG 10774 / NCTC 10582 / VPI-5482 / E50).